Consider the following 663-residue polypeptide: UvrABC system protein B (663 aa).

A Helicase ATP-binding domain is found at 26–183; that stretch reads DGLESGLAKQ…KRLAEMQYTR (158 aa). Position 39 to 46 (39 to 46) interacts with ATP; that stretch reads GVTGSGKT. The short motif at 92–115 is the Beta-hairpin element; that stretch reads YYDYYQPEAYVPASDTFIEKDASI. The 167-residue stretch at 430–596 folds into the Helicase C-terminal domain; the sequence is QVDDLMSEIR…GINKSVEDIL (167 aa). A UVR domain is found at 624-659; it reads AKQINALEKQMYAHAQNMEFELAAKIRDEYLLLKEQ.

Belongs to the UvrB family. As to quaternary structure, forms a heterotetramer with UvrA during the search for lesions. Interacts with UvrC in an incision complex.

Its subcellular location is the cytoplasm. The UvrABC repair system catalyzes the recognition and processing of DNA lesions. A damage recognition complex composed of 2 UvrA and 2 UvrB subunits scans DNA for abnormalities. Upon binding of the UvrA(2)B(2) complex to a putative damaged site, the DNA wraps around one UvrB monomer. DNA wrap is dependent on ATP binding by UvrB and probably causes local melting of the DNA helix, facilitating insertion of UvrB beta-hairpin between the DNA strands. Then UvrB probes one DNA strand for the presence of a lesion. If a lesion is found the UvrA subunits dissociate and the UvrB-DNA preincision complex is formed. This complex is subsequently bound by UvrC and the second UvrB is released. If no lesion is found, the DNA wraps around the other UvrB subunit that will check the other stand for damage. This is UvrABC system protein B from Legionella pneumophila (strain Corby).